Reading from the N-terminus, the 78-residue chain is Large ribosomal subunit protein eL20 (78 aa).

It belongs to the eukaryotic ribosomal protein eL20 family. Part of the 50S ribosomal subunit. Binds 23S rRNA.

The polypeptide is Large ribosomal subunit protein eL20 (Pyrobaculum aerophilum (strain ATCC 51768 / DSM 7523 / JCM 9630 / CIP 104966 / NBRC 100827 / IM2)).